A 266-amino-acid chain; its full sequence is Aquaporin TIP3-2 (266 aa).

A run of 2 helical transmembrane segments spans residues 29–49 (AAIS…GSVL) and 66–86 (GLVA…AVAV). The short motif at 94–96 (NPA) is the NPA 1 element. The next 3 membrane-spanning stretches (helical) occupy residues 109–129 (LVRA…ATLL), 153–173 (AVLL…ATVV), and 180–200 (LGTI…LAGG). Positions 208 to 210 (NPA) match the NPA 2 motif. Residues 228–248 (YWLGPFLGAGLAGLVYEYLLI) traverse the membrane as a helical segment.

Belongs to the MIP/aquaporin (TC 1.A.8) family. TIP (TC 1.A.8.10) subfamily.

It localises to the vacuole membrane. Aquaporins facilitate the transport of water and small neutral solutes across cell membranes. The polypeptide is Aquaporin TIP3-2 (TIP3-2) (Zea mays (Maize)).